We begin with the raw amino-acid sequence, 462 residues long: uncharacterized protein (462 aa).

The next 2 membrane-spanning stretches (helical) occupy residues 12–32 (WWWL…APTV) and 257–277 (GLCV…LELV).

It belongs to the HHV-5 US29 protein family.

It is found in the host membrane. This is an uncharacterized protein from Homo sapiens (Human).